The chain runs to 455 residues: tRNA modification GTPase MnmE (455 aa).

Arg26, Glu86, and Arg125 together coordinate (6S)-5-formyl-5,6,7,8-tetrahydrofolate. In terms of domain architecture, TrmE-type G spans 222–376 (GLKTAIIGRP…VEEKINQIFF (155 aa)). Residue Asn232 coordinates K(+). GTP contacts are provided by residues 232 to 237 (NVGKSS), 251 to 257 (TDIAGTT), and 276 to 279 (DTAG). Ser236 is a Mg(2+) binding site. The K(+) site is built by Thr251, Ile253, and Thr256. Thr257 lines the Mg(2+) pocket. (6S)-5-formyl-5,6,7,8-tetrahydrofolate is bound at residue Lys455.

It belongs to the TRAFAC class TrmE-Era-EngA-EngB-Septin-like GTPase superfamily. TrmE GTPase family. In terms of assembly, homodimer. Heterotetramer of two MnmE and two MnmG subunits. It depends on K(+) as a cofactor.

The protein localises to the cytoplasm. Exhibits a very high intrinsic GTPase hydrolysis rate. Involved in the addition of a carboxymethylaminomethyl (cmnm) group at the wobble position (U34) of certain tRNAs, forming tRNA-cmnm(5)s(2)U34. The polypeptide is tRNA modification GTPase MnmE (Lactococcus lactis subsp. cremoris (strain SK11)).